A 316-amino-acid polypeptide reads, in one-letter code: 4-hydroxy-3-methylbut-2-enyl diphosphate reductase (316 aa).

[4Fe-4S] cluster is bound at residue C12. 2 residues coordinate (2E)-4-hydroxy-3-methylbut-2-enyl diphosphate: H43 and H81. 2 residues coordinate dimethylallyl diphosphate: H43 and H81. H43 and H81 together coordinate isopentenyl diphosphate. C103 lines the [4Fe-4S] cluster pocket. Residue H131 coordinates (2E)-4-hydroxy-3-methylbut-2-enyl diphosphate. A dimethylallyl diphosphate-binding site is contributed by H131. H131 serves as a coordination point for isopentenyl diphosphate. Residue E133 is the Proton donor of the active site. (2E)-4-hydroxy-3-methylbut-2-enyl diphosphate is bound at residue T170. Position 198 (C198) interacts with [4Fe-4S] cluster. The (2E)-4-hydroxy-3-methylbut-2-enyl diphosphate site is built by S226, N228, and S271. 3 residues coordinate dimethylallyl diphosphate: S226, N228, and S271. Positions 226, 228, and 271 each coordinate isopentenyl diphosphate.

The protein belongs to the IspH family. It depends on [4Fe-4S] cluster as a cofactor.

The catalysed reaction is isopentenyl diphosphate + 2 oxidized [2Fe-2S]-[ferredoxin] + H2O = (2E)-4-hydroxy-3-methylbut-2-enyl diphosphate + 2 reduced [2Fe-2S]-[ferredoxin] + 2 H(+). It catalyses the reaction dimethylallyl diphosphate + 2 oxidized [2Fe-2S]-[ferredoxin] + H2O = (2E)-4-hydroxy-3-methylbut-2-enyl diphosphate + 2 reduced [2Fe-2S]-[ferredoxin] + 2 H(+). The protein operates within isoprenoid biosynthesis; dimethylallyl diphosphate biosynthesis; dimethylallyl diphosphate from (2E)-4-hydroxy-3-methylbutenyl diphosphate: step 1/1. Its pathway is isoprenoid biosynthesis; isopentenyl diphosphate biosynthesis via DXP pathway; isopentenyl diphosphate from 1-deoxy-D-xylulose 5-phosphate: step 6/6. Functionally, catalyzes the conversion of 1-hydroxy-2-methyl-2-(E)-butenyl 4-diphosphate (HMBPP) into a mixture of isopentenyl diphosphate (IPP) and dimethylallyl diphosphate (DMAPP). Acts in the terminal step of the DOXP/MEP pathway for isoprenoid precursor biosynthesis. The polypeptide is 4-hydroxy-3-methylbut-2-enyl diphosphate reductase (Bacillus cereus (strain B4264)).